Reading from the N-terminus, the 622-residue chain is Meiotic expression up-regulated protein 25 (622 aa).

The chain is Meiotic expression up-regulated protein 25 (meu25) from Schizosaccharomyces pombe (strain 972 / ATCC 24843) (Fission yeast).